A 248-amino-acid polypeptide reads, in one-letter code: Ribosomal RNA small subunit methyltransferase J (248 aa).

S-adenosyl-L-methionine contacts are provided by residues 98–99 (RD), 114–115 (ER), 150–151 (SS), and Asp168.

It belongs to the methyltransferase superfamily. RsmJ family.

It localises to the cytoplasm. The enzyme catalyses guanosine(1516) in 16S rRNA + S-adenosyl-L-methionine = N(2)-methylguanosine(1516) in 16S rRNA + S-adenosyl-L-homocysteine + H(+). Its function is as follows. Specifically methylates the guanosine in position 1516 of 16S rRNA. This is Ribosomal RNA small subunit methyltransferase J from Shewanella denitrificans (strain OS217 / ATCC BAA-1090 / DSM 15013).